A 393-amino-acid chain; its full sequence is NAD(P)H-quinone oxidoreductase subunit H, chloroplastic (393 aa).

The protein belongs to the complex I 49 kDa subunit family. In terms of assembly, NDH is composed of at least 16 different subunits, 5 of which are encoded in the nucleus. Interacts with the chaperonin CNP60B4 subunit.

It localises to the plastid. Its subcellular location is the chloroplast thylakoid membrane. The catalysed reaction is a plastoquinone + NADH + (n+1) H(+)(in) = a plastoquinol + NAD(+) + n H(+)(out). It carries out the reaction a plastoquinone + NADPH + (n+1) H(+)(in) = a plastoquinol + NADP(+) + n H(+)(out). Its function is as follows. NDH shuttles electrons from NAD(P)H:plastoquinone, via FMN and iron-sulfur (Fe-S) centers, to quinones in the photosynthetic chain and possibly in a chloroplast respiratory chain. The immediate electron acceptor for the enzyme in this species is believed to be plastoquinone. Couples the redox reaction to proton translocation, and thus conserves the redox energy in a proton gradient. This Arabidopsis thaliana (Mouse-ear cress) protein is NAD(P)H-quinone oxidoreductase subunit H, chloroplastic.